We begin with the raw amino-acid sequence, 263 residues long: H-2 class II histocompatibility antigen, A-K beta chain (263 aa).

An N-terminal signal peptide occupies residues 1 to 27 (MALQIPSLLLLAAVVVLTVLSSPGTEG). The beta-1 stretch occupies residues 28-120 (GNSERHFVHQ…TETPTSLRRL (93 aa)). Residues 28 to 224 (GNSERHFVHQ…RAQSESARSK (197 aa)) lie on the Extracellular side of the membrane. 2 disulfide bridges follow: Cys-42–Cys-104 and Cys-143–Cys-199. Asn-46 carries N-linked (GlcNAc...) asparagine glycosylation. The beta-2 stretch occupies residues 121–214 (EQPSVVISLS…SLKSPITVEW (94 aa)). One can recognise an Ig-like C1-type domain in the interval 123–211 (PSVVISLSRT…EHPSLKSPIT (89 aa)). A connecting peptide region spans residues 215–224 (RAQSESARSK). Residues 225–245 (MLSGIGGCVLGVIFLGLGLFI) traverse the membrane as a helical segment. Residues 246–263 (RHRSQKGPRGPPPAGLLQ) lie on the Cytoplasmic side of the membrane.

Belongs to the MHC class II family. Ubiquitinated in immature dendritic cells leading to down-regulation of MHC class II.

It localises to the membrane. The polypeptide is H-2 class II histocompatibility antigen, A-K beta chain (H2-Ab1) (Mus musculus (Mouse)).